The sequence spans 393 residues: Ubiquitin-like modifier-activating enzyme 5 (393 aa).

ATP-binding residues include G75, D96, K119, N142, and N175. Zn(2+)-binding residues include C217 and C220. The active-site Glycyl thioester intermediate is C241. Residues C294 and C299 each coordinate Zn(2+).

The protein belongs to the ubiquitin-activating E1 family. UBA5 subfamily.

E1-like enzyme which activates UFM1. The polypeptide is Ubiquitin-like modifier-activating enzyme 5 (Bombyx mori (Silk moth)).